Reading from the N-terminus, the 360-residue chain is Glycerol-1-phosphate dehydrogenase [NAD(P)+] (360 aa).

NAD(+) is bound by residues 108-112 and 130-133; these read GRVID and TAAS. Asp-135 is a substrate binding site. An NAD(+)-binding site is contributed by Ser-139. Asp-182 is a binding site for substrate. Zn(2+)-binding residues include Asp-182 and His-262. A substrate-binding site is contributed by His-266. Position 278 (His-278) interacts with Zn(2+).

It belongs to the glycerol-1-phosphate dehydrogenase family. Zn(2+) serves as cofactor.

It is found in the cytoplasm. It catalyses the reaction sn-glycerol 1-phosphate + NAD(+) = dihydroxyacetone phosphate + NADH + H(+). It carries out the reaction sn-glycerol 1-phosphate + NADP(+) = dihydroxyacetone phosphate + NADPH + H(+). It functions in the pathway membrane lipid metabolism; glycerophospholipid metabolism. Catalyzes the NAD(P)H-dependent reduction of dihydroxyacetonephosphate (DHAP or glycerone phosphate) to glycerol 1-phosphate (G1P). The G1P thus generated is used as the glycerophosphate backbone of phospholipids in the cellular membranes of Archaea. The sequence is that of Glycerol-1-phosphate dehydrogenase [NAD(P)+] from Methanocorpusculum labreanum (strain ATCC 43576 / DSM 4855 / Z).